We begin with the raw amino-acid sequence, 258 residues long: Apolipoprotein A-I (258 aa).

The N-terminal stretch at 1–18 (MKFLVLALTILLAAGTQA) is a signal peptide. Positions 32–63 (VKAALNMYIAQVKLTAQRSIDLLDDTEYKEYK) are 3 X approximate tandem repeats. Tandem repeats lie at residues 64 to 85 (MQLS…KSWP) and 86 to 106 (PTPR…AEVM). A 10 X approximate tandem repeats region spans residues 64 to 258 (MQLSQSLDNL…WLSTRPSARP (195 aa)). Residues 107 to 117 (KDVEDVRTQLE) form a 3; half-length repeat. 7 repeat units span residues 118-139 (PKRA…KKLE), 140-161 (PLIK…AKID), 162-183 (PVVE…TKLM), 184-205 (PIVE…TLAA), 206-227 (PYAE…EKVA), 228-238 (PLSEDFKARWA), and 239-258 (PPPR…SARP). The interval 233 to 258 (FKARWAPPPRRPSKSSWLSTRPSARP) is disordered. Residues 246-258 (KSSWLSTRPSARP) are compositionally biased toward polar residues.

It belongs to the apolipoprotein A1/A4/E family. In terms of tissue distribution, major protein of plasma HDL, also found in chylomicrons. Expressed in liver, intestine and muscle.

It localises to the secreted. Its function is as follows. Participates in the reverse transport of cholesterol from tissues to the liver for excretion by promoting cholesterol efflux from tissues and by acting as a cofactor for the lecithin cholesterol acyltransferase (LCAT). This chain is Apolipoprotein A-I (apoa1), found in Salmo salar (Atlantic salmon).